The sequence spans 348 residues: Carbamoyl phosphate synthase small chain (348 aa).

The interval 1–167 (MKRYLITSDG…VKNIRGKGER (167 aa)) is CPSase. L-glutamine contacts are provided by Ser-45, Gly-213, and Gly-215. The Glutamine amidotransferase type-1 domain maps to 168–348 (RILFIDLGSK…RRRTEDAAKG (181 aa)). Cys-242 (nucleophile) is an active-site residue. Phe-243, Gln-246, Asn-282, Gly-284, and Tyr-285 together coordinate L-glutamine. Residues His-321 and Glu-323 contribute to the active site.

It belongs to the CarA family. As to quaternary structure, composed of two chains; the small (or glutamine) chain promotes the hydrolysis of glutamine to ammonia, which is used by the large (or ammonia) chain to synthesize carbamoyl phosphate. Tetramer of heterodimers (alpha,beta)4.

The enzyme catalyses hydrogencarbonate + L-glutamine + 2 ATP + H2O = carbamoyl phosphate + L-glutamate + 2 ADP + phosphate + 2 H(+). The catalysed reaction is L-glutamine + H2O = L-glutamate + NH4(+). The protein operates within amino-acid biosynthesis; L-arginine biosynthesis; carbamoyl phosphate from bicarbonate: step 1/1. Its pathway is pyrimidine metabolism; UMP biosynthesis via de novo pathway; (S)-dihydroorotate from bicarbonate: step 1/3. Its function is as follows. Small subunit of the glutamine-dependent carbamoyl phosphate synthetase (CPSase). CPSase catalyzes the formation of carbamoyl phosphate from the ammonia moiety of glutamine, carbonate, and phosphate donated by ATP, constituting the first step of 2 biosynthetic pathways, one leading to arginine and/or urea and the other to pyrimidine nucleotides. The small subunit (glutamine amidotransferase) binds and cleaves glutamine to supply the large subunit with the substrate ammonia. This Thermoplasma acidophilum (strain ATCC 25905 / DSM 1728 / JCM 9062 / NBRC 15155 / AMRC-C165) protein is Carbamoyl phosphate synthase small chain.